Consider the following 409-residue polypeptide: N-acetylglucosamine-6-phosphate deacetylase (409 aa).

Glu143 contributes to the a divalent metal cation binding site. A substrate-binding site is contributed by 154 to 155; that stretch reads AH. Residues His211 and His232 each contribute to the a divalent metal cation site. Substrate is bound by residues 235-236, Arg243, and 269-272; these read NA and DGIH. Asp294 acts as the Proton donor/acceptor in catalysis. A substrate-binding site is contributed by 328-330; that stretch reads LGG.

This sequence belongs to the metallo-dependent hydrolases superfamily. NagA family. Requires a divalent metal cation as cofactor.

It catalyses the reaction N-acetyl-D-glucosamine 6-phosphate + H2O = D-glucosamine 6-phosphate + acetate. It functions in the pathway amino-sugar metabolism; N-acetylneuraminate degradation. Its function is as follows. Hydrolyzes the N-glycolyl group from N-glycolylglucosamine 6-phosphate (GlcNGc-6-P) in the N-glycolylneuraminic acid (Neu5Gc) degradation pathway. The polypeptide is N-acetylglucosamine-6-phosphate deacetylase (Amdhd2) (Mus musculus (Mouse)).